The sequence spans 182 residues: Protein GrpE (182 aa).

Over residues M1–E17 the composition is skewed to basic and acidic residues. The segment at M1–V33 is disordered.

This sequence belongs to the GrpE family. Homodimer.

Its subcellular location is the cytoplasm. Its function is as follows. Participates actively in the response to hyperosmotic and heat shock by preventing the aggregation of stress-denatured proteins, in association with DnaK and GrpE. It is the nucleotide exchange factor for DnaK and may function as a thermosensor. Unfolded proteins bind initially to DnaJ; upon interaction with the DnaJ-bound protein, DnaK hydrolyzes its bound ATP, resulting in the formation of a stable complex. GrpE releases ADP from DnaK; ATP binding to DnaK triggers the release of the substrate protein, thus completing the reaction cycle. Several rounds of ATP-dependent interactions between DnaJ, DnaK and GrpE are required for fully efficient folding. In Borrelia hermsii (strain HS1 / DAH), this protein is Protein GrpE.